The primary structure comprises 277 residues: MGCVPRIEFGCSSQSLTLSWNLRAWNLCRLNTISHFQKLPYPLVASTRKHYKNSLLLKRFLVGVGTEESSLSEDLLDESLSRPLTSDELKSLLIDTERSKLVKKLSEANQQNRFLKRQLKTQEHEITNIKTELALMELEVQALVKLAEEIANLGIPQGSRKISGKYIQSHLLSRLDAVQKKMKEQIKGVEAAQSKEVHVFWIGMAESVQVMGSFDGWSQREDLSPEYSALFTKFSTTLFLRPGRYEMKFLVDGEWQISPEFPTSGEGLMENNVLVVE.

A chloroplast-targeting transit peptide spans 1–44; the sequence is MGCVPRIEFGCSSQSLTLSWNLRAWNLCRLNTISHFQKLPYPLV. Residues 95–152 adopt a coiled-coil conformation; the sequence is DTERSKLVKKLSEANQQNRFLKRQLKTQEHEITNIKTELALMELEVQALVKLAEEIAN.

In terms of assembly, interacts with GBSS1.

Its subcellular location is the plastid. It localises to the chloroplast stroma. Its function is as follows. Involved in targeting GBSS1 to the starch granule. Was originally thought to be a carbohydrate-binding scaffold protein, but it has been shown that it is mainly found as a soluble protein and that interaction with GBSS1 is a pre-requisite for subsequent starch granule binding. Dissociation from starch as a function of pH, Mg(2+) concentration or redox state is not observed. Interacts primarily with amylopectin and is required for amylose synthesis. This Arabidopsis thaliana (Mouse-ear cress) protein is Protein PTST, chloroplastic.